The chain runs to 164 residues: NADH-quinone oxidoreductase subunit I (164 aa).

2 4Fe-4S ferredoxin-type domains span residues 55–84 (RRYEGGEERCVACKLCEAICPAQAIYIEID) and 95–124 (KVYDIDLFKCIYCGLCEEACPVEAIVMGPY). Cys64, Cys67, Cys70, Cys74, Cys104, Cys107, Cys110, and Cys114 together coordinate [4Fe-4S] cluster.

Belongs to the complex I 23 kDa subunit family. In terms of assembly, NDH-1 is composed of 14 different subunits. Subunits NuoA, H, J, K, L, M, N constitute the membrane sector of the complex. The cofactor is [4Fe-4S] cluster.

It localises to the cell inner membrane. It carries out the reaction a quinone + NADH + 5 H(+)(in) = a quinol + NAD(+) + 4 H(+)(out). In terms of biological role, NDH-1 shuttles electrons from NADH, via FMN and iron-sulfur (Fe-S) centers, to quinones in the respiratory chain. The immediate electron acceptor for the enzyme in this species is believed to be ubiquinone. Couples the redox reaction to proton translocation (for every two electrons transferred, four hydrogen ions are translocated across the cytoplasmic membrane), and thus conserves the redox energy in a proton gradient. In Magnetococcus marinus (strain ATCC BAA-1437 / JCM 17883 / MC-1), this protein is NADH-quinone oxidoreductase subunit I.